We begin with the raw amino-acid sequence, 210 residues long: LexA repressor (210 aa).

The H-T-H motif DNA-binding region spans 28-48 (FEEIAEGMGLSSLATVHKHIG). Residues S131 and K169 each act as for autocatalytic cleavage activity in the active site.

Belongs to the peptidase S24 family. Homodimer.

It catalyses the reaction Hydrolysis of Ala-|-Gly bond in repressor LexA.. Its function is as follows. Represses a number of genes involved in the response to DNA damage (SOS response), including recA and lexA. In the presence of single-stranded DNA, RecA interacts with LexA causing an autocatalytic cleavage which disrupts the DNA-binding part of LexA, leading to derepression of the SOS regulon and eventually DNA repair. In Koribacter versatilis (strain Ellin345), this protein is LexA repressor.